The following is a 452-amino-acid chain: Pentatricopeptide repeat-containing protein At2g30780 (452 aa).

PPR repeat units follow at residues 137-171 (TASV…THCA), 173-207 (TVVT…KLPP), 208-242 (NSVT…PVEP), 243-273 (DTDT…IKDQ), 350-384 (KSSI…GWKL), 385-419 (CRSL…NYGL), and 420-452 (VTKT…KRGL).

This sequence belongs to the PPR family. P subfamily.

The chain is Pentatricopeptide repeat-containing protein At2g30780 from Arabidopsis thaliana (Mouse-ear cress).